A 158-amino-acid chain; its full sequence is GTP-dependent dephospho-CoA kinase (158 aa).

6 residues coordinate GTP: aspartate 35, valine 36, aspartate 54, lysine 56, glutamate 109, and aspartate 132.

The protein belongs to the GTP-dependent DPCK family.

It catalyses the reaction 3'-dephospho-CoA + GTP = GDP + CoA + H(+). It functions in the pathway cofactor biosynthesis; coenzyme A biosynthesis. Its function is as follows. Catalyzes the GTP-dependent phosphorylation of the 3'-hydroxyl group of dephosphocoenzyme A to form coenzyme A (CoA). The polypeptide is GTP-dependent dephospho-CoA kinase (Methanococcus maripaludis (strain DSM 14266 / JCM 13030 / NBRC 101832 / S2 / LL)).